A 154-amino-acid polypeptide reads, in one-letter code: 6,7-dimethyl-8-ribityllumazine synthase (154 aa).

5-amino-6-(D-ribitylamino)uracil contacts are provided by residues phenylalanine 22, 56 to 58, and 80 to 82; these read AFE and TVI. 85 to 86 contributes to the (2S)-2-hydroxy-3-oxobutyl phosphate binding site; it reads AT. The active-site Proton donor is the histidine 88. Phenylalanine 113 contacts 5-amino-6-(D-ribitylamino)uracil. Arginine 127 lines the (2S)-2-hydroxy-3-oxobutyl phosphate pocket.

Belongs to the DMRL synthase family. As to quaternary structure, forms an icosahedral capsid composed of 60 subunits, arranged as a dodecamer of pentamers.

The catalysed reaction is (2S)-2-hydroxy-3-oxobutyl phosphate + 5-amino-6-(D-ribitylamino)uracil = 6,7-dimethyl-8-(1-D-ribityl)lumazine + phosphate + 2 H2O + H(+). It functions in the pathway cofactor biosynthesis; riboflavin biosynthesis; riboflavin from 2-hydroxy-3-oxobutyl phosphate and 5-amino-6-(D-ribitylamino)uracil: step 1/2. Functionally, catalyzes the formation of 6,7-dimethyl-8-ribityllumazine by condensation of 5-amino-6-(D-ribitylamino)uracil with 3,4-dihydroxy-2-butanone 4-phosphate. This is the penultimate step in the biosynthesis of riboflavin. The protein is 6,7-dimethyl-8-ribityllumazine synthase of Bacillus pumilus (strain SAFR-032).